A 99-amino-acid polypeptide reads, in one-letter code: Malonate decarboxylase acyl carrier protein (99 aa).

Ser25 is subject to O-(phosphoribosyl dephospho-coenzyme A)serine.

The protein belongs to the MdcC family. Covalently binds the prosthetic group of malonate decarboxylase.

The protein localises to the cytoplasm. Subunit of malonate decarboxylase, it is an acyl carrier protein to which acetyl and malonyl thioester residues are bound via a 2'-(5''-phosphoribosyl)-3'-dephospho-CoA prosthetic group and turn over during the catalytic mechanism. The sequence is that of Malonate decarboxylase acyl carrier protein from Stutzerimonas stutzeri (strain A1501) (Pseudomonas stutzeri).